We begin with the raw amino-acid sequence, 310 residues long: Thioredoxin reductase (310 aa).

Residue 34 to 41 (NGMQPGGQ) participates in FAD binding. C135 and C138 form a disulfide bridge. 281 to 290 (DVQDKIYRQA) contributes to the FAD binding site.

The protein belongs to the class-II pyridine nucleotide-disulfide oxidoreductase family. Homodimer. It depends on FAD as a cofactor.

The protein resides in the cytoplasm. The catalysed reaction is [thioredoxin]-dithiol + NADP(+) = [thioredoxin]-disulfide + NADPH + H(+). The polypeptide is Thioredoxin reductase (trxB) (Rickettsia typhi (strain ATCC VR-144 / Wilmington)).